The primary structure comprises 400 residues: Peroxisome biogenesis factor 16 (400 aa).

The tract at residues 176-226 (QKQFQNKRPAVTMSINNNNNINNNDNNNINNNNNTNDDNFNNNNNNNNNRR) is disordered. Over residues 190–224 (INNNNNINNNDNNNINNNNNTNDDNFNNNNNNNNN) the composition is skewed to low complexity.

The protein belongs to the peroxin-16 family.

It is found in the cytoplasm. Its function is as follows. Required for peroxisome membrane biogenesis. The sequence is that of Peroxisome biogenesis factor 16 (pex16) from Dictyostelium discoideum (Social amoeba).